The chain runs to 428 residues: Glutamine synthetase, chloroplastic (428 aa).

Residues 1-48 (MAQAVVPAMQCQVGAVRARPAAAAAAAGGRVWGVRRTGRGTSGFRVMA) constitute a chloroplast transit peptide. The GS beta-grasp domain maps to 75–155 (IIAEYIWVGG…VMCDTYTPAG (81 aa)). The disordered stretch occupies residues 95-120 (TISKPVEDPSELPKWNYDGSSTGQAP). Positions 159–428 (PTNKRNRAAQ…LAAKKLALKV (270 aa)) constitute a GS catalytic domain.

Belongs to the glutamine synthetase family. Homooctamer.

Its subcellular location is the plastid. The protein resides in the chloroplast. It carries out the reaction L-glutamate + NH4(+) + ATP = L-glutamine + ADP + phosphate + H(+). In terms of biological role, light-modulated chloroplastic glutamine synthetase, encoded by a nuclear gene and expressed primarily in leaves, and which is responsible for the reassimilation of the ammonia generated by photorespiration. In Oryza sativa subsp. japonica (Rice), this protein is Glutamine synthetase, chloroplastic.